The sequence spans 151 residues: Methylglyoxal synthase (151 aa).

The 146-residue stretch at 6–151 (RTMPAHKHVA…DYDAYLAERT (146 aa)) folds into the MGS-like domain. Substrate is bound by residues His-19, Lys-23, 45-48 (TGTT), and 65-66 (SG). The active-site Proton donor/acceptor is Asp-71. His-98 is a substrate binding site.

Belongs to the methylglyoxal synthase family.

The enzyme catalyses dihydroxyacetone phosphate = methylglyoxal + phosphate. Its function is as follows. Catalyzes the formation of methylglyoxal from dihydroxyacetone phosphate. The protein is Methylglyoxal synthase of Vibrio campbellii (strain ATCC BAA-1116).